A 187-amino-acid polypeptide reads, in one-letter code: MPTDMSMWTGPLSLHEVDEQPQHLLRVTYTEAEVEELGQVLTPTQVKHRPGSISWDGLDPGKLYTLILTDPDAPSRKKPVYREWHHFLVVNMKGNDISSGNVLSDYVGSGPPKGTGLHRYVWLVYQQDKPLRCDEPILTNRSGDHRGKFKTAAFRKKYHLGAPVAGTCYQAEWDSYVPKLYKQLSGK.

Phosphoserine occurs at positions 13, 52, and 54.

It belongs to the phosphatidylethanolamine-binding protein family. As to expression, testis specific.

Its subcellular location is the cytoplasm. Functionally, may bind to phospholipids. May act as serine protease inhibitor. This is Phosphatidylethanolamine-binding protein 2 (Pbp2) from Mus musculus (Mouse).